The primary structure comprises 521 residues: Bifunctional purine biosynthesis protein PurH (521 aa).

An MGS-like domain is found at 1–145 (MIKQALISVS…KNHRDVTVVV (145 aa)).

It belongs to the PurH family.

The enzyme catalyses (6R)-10-formyltetrahydrofolate + 5-amino-1-(5-phospho-beta-D-ribosyl)imidazole-4-carboxamide = 5-formamido-1-(5-phospho-D-ribosyl)imidazole-4-carboxamide + (6S)-5,6,7,8-tetrahydrofolate. It carries out the reaction IMP + H2O = 5-formamido-1-(5-phospho-D-ribosyl)imidazole-4-carboxamide. It participates in purine metabolism; IMP biosynthesis via de novo pathway; 5-formamido-1-(5-phospho-D-ribosyl)imidazole-4-carboxamide from 5-amino-1-(5-phospho-D-ribosyl)imidazole-4-carboxamide (10-formyl THF route): step 1/1. The protein operates within purine metabolism; IMP biosynthesis via de novo pathway; IMP from 5-formamido-1-(5-phospho-D-ribosyl)imidazole-4-carboxamide: step 1/1. This is Bifunctional purine biosynthesis protein PurH from Paraburkholderia xenovorans (strain LB400).